A 926-amino-acid polypeptide reads, in one-letter code: Alpha-aminoadipic semialdehyde synthase, mitochondrial (926 aa).

The transit peptide at 1–27 (MLQVHRTGLGRLGVSLSKGLHHKAVLA) directs the protein to the mitochondrion. Positions 28 to 476 (VRREDVNAWE…ESRERAQSLS (449 aa)) are lysine-ketoglutarate reductase. N6-acetyllysine occurs at positions 48 and 56. Lys-93 bears the N6-acetyllysine; alternate mark. The residue at position 93 (Lys-93) is an N6-succinyllysine; alternate. Lys-128 carries the post-translational modification N6-acetyllysine. Lys-138 bears the N6-acetyllysine; alternate mark. An N6-succinyllysine; alternate modification is found at Lys-138. An N6-succinyllysine modification is found at Lys-274. Residue Lys-286 is modified to N6-acetyllysine; alternate. Residue Lys-286 is modified to N6-succinyllysine; alternate. Position 333 is an N6-succinyllysine (Lys-333). Lys-458 bears the N6-acetyllysine; alternate mark. Position 458 is an N6-succinyllysine; alternate (Lys-458). The saccharopine dehydrogenase stretch occupies residues 477 to 926 (MGTRRKVLVL…IYTTQSTIKP (450 aa)). NAD(+)-binding residues include Ser-488, Asp-512, and Gln-516. The residue at position 523 (Lys-523) is an N6-acetyllysine; alternate. Lys-523 is modified (N6-succinyllysine; alternate). Ile-533 serves as a coordination point for NAD(+). Lys-535 is modified (N6-acetyllysine; alternate). An N6-succinyllysine; alternate modification is found at Lys-535. NAD(+) contacts are provided by Leu-554, Ala-576, and Ser-577. 577-578 (SY) is a binding site for L-saccharopine. N6-acetyllysine; alternate is present on Lys-584. Lys-584 bears the N6-succinyllysine; alternate mark. NAD(+) contacts are provided by Leu-603, Asp-604, and Pro-605. Asp-604 provides a ligand contact to L-saccharopine. Arg-703 contributes to the L-saccharopine binding site. Lys-707 is modified (N6-acetyllysine). 724–726 (TLR) contacts L-saccharopine. Lys-732 carries the N6-succinyllysine modification. Position 739 is an N6-acetyllysine (Lys-739). An N6-acetyllysine; alternate modification is found at Lys-761. At Lys-761 the chain carries N6-succinyllysine; alternate. Position 780 is an N6-acetyllysine (Lys-780).

It in the N-terminal section; belongs to the AlaDH/PNT family. The protein in the C-terminal section; belongs to the saccharopine dehydrogenase family. Homotetramer. Expressed in all 16 tissues examined with highest expression in the liver.

The protein localises to the mitochondrion. The catalysed reaction is L-saccharopine + NADP(+) + H2O = L-lysine + 2-oxoglutarate + NADPH + H(+). It catalyses the reaction L-saccharopine + NAD(+) + H2O = (S)-2-amino-6-oxohexanoate + L-glutamate + NADH + H(+). It participates in amino-acid degradation; L-lysine degradation via saccharopine pathway; glutaryl-CoA from L-lysine: step 1/6. Its pathway is amino-acid degradation; L-lysine degradation via saccharopine pathway; glutaryl-CoA from L-lysine: step 2/6. Bifunctional enzyme that catalyzes the first two steps in lysine degradation. In Homo sapiens (Human), this protein is Alpha-aminoadipic semialdehyde synthase, mitochondrial.